The following is a 743-amino-acid chain: Dystrobrevin alpha (743 aa).

Positions 1 to 288 (MIEDSGKRGN…SHSNQHQMKE (288 aa)) are interaction with MAGEE1. The segment at 238–294 (FHPVECSYCHSESMMGFRYRCQQCHNYQLCQDCFWRGHAGGSHSNQHQMKEYTSWKS) adopts a ZZ-type zinc-finger fold. Zn(2+) contacts are provided by Cys243, Cys246, Cys258, Cys261, Cys267, Cys270, His280, and His284. A syntrophin-binding region region spans residues 400-450 (DRLADEHVLIGLYVNMLRNNPSCMLESSNRLDEEHRLIARYAARLAAESSS). The stretch at 461–556 (DISFTIDANK…EGLMKLLKTQ (96 aa)) forms a coiled coil. A disordered region spans residues 556–575 (QGAGSPRSSPSHTISRPIPM). A compositionally biased stretch (polar residues) spans 557-569 (GAGSPRSSPSHTI). Residue Ser662 is modified to Phosphoserine.

The protein belongs to the dystrophin family. Dystrobrevin subfamily. In terms of assembly, interacts with dystrophin, utrophin and the syntrophins SNTA1, SNTB1, SNTB2, SNTG1 and SNTG2. Interacts with MAGEE1. Binds dystrobrevin binding protein 1. Interacts with CTNNAL1. The interaction is required for correct localization of both CTNNAL1 and DTNA. Does not interact with dystrophin. In terms of processing, phosphorylation of DTN-1 on tyrosine kinase substrate domain present in the C-terminus. In terms of tissue distribution, highly expressed in brain, skeletal and cardiac muscles, and expressed at lower levels in lung, liver and pancreas. Isoform 2 is not expressed in cardiac muscle. Isoform 7 and isoform 8 are only expressed in muscle.

The protein localises to the cytoplasm. It localises to the synapse. Its subcellular location is the cell membrane. In terms of biological role, may be involved in the formation and stability of synapses as well as being involved in the clustering of nicotinic acetylcholine receptors. The chain is Dystrobrevin alpha from Homo sapiens (Human).